A 557-amino-acid chain; its full sequence is Potassium-transporting ATPase potassium-binding subunit (557 aa).

The next 12 helical transmembrane spans lie at glycine 5–serine 25, leucine 63–glycine 83, glycine 132–isoleucine 152, leucine 170–isoleucine 190, phenylalanine 253–valine 273, leucine 283–valine 303, valine 329–alanine 349, alanine 356–valine 376, glycine 379–glycine 399, leucine 416–methionine 436, leucine 484–alanine 504, and leucine 526–alanine 546.

Belongs to the KdpA family. In terms of assembly, the system is composed of three essential subunits: KdpA, KdpB and KdpC.

It is found in the cell inner membrane. Part of the high-affinity ATP-driven potassium transport (or Kdp) system, which catalyzes the hydrolysis of ATP coupled with the electrogenic transport of potassium into the cytoplasm. This subunit binds the periplasmic potassium ions and delivers the ions to the membrane domain of KdpB through an intramembrane tunnel. The sequence is that of Potassium-transporting ATPase potassium-binding subunit from Escherichia coli (strain SMS-3-5 / SECEC).